The sequence spans 280 residues: Eukaryotic translation initiation factor 3 subunit F-1 (280 aa).

An MPN domain is found at 8–138 (VRVHPVVLFQ…LRAYVCIQLG (131 aa)).

It belongs to the eIF-3 subunit F family. In terms of assembly, component of the eukaryotic translation initiation factor 3 (eIF-3) complex. The eIF-3 complex interacts with pix.

The protein localises to the cytoplasm. Functionally, component of the eukaryotic translation initiation factor 3 (eIF-3) complex, which is involved in protein synthesis of a specialized repertoire of mRNAs and, together with other initiation factors, stimulates binding of mRNA and methionyl-tRNAi to the 40S ribosome. The eIF-3 complex specifically targets and initiates translation of a subset of mRNAs involved in cell proliferation. In Drosophila virilis (Fruit fly), this protein is Eukaryotic translation initiation factor 3 subunit F-1.